The following is a 186-amino-acid chain: ATP synthase subunit delta (186 aa).

It belongs to the ATPase delta chain family. As to quaternary structure, F-type ATPases have 2 components, F(1) - the catalytic core - and F(0) - the membrane proton channel. F(1) has five subunits: alpha(3), beta(3), gamma(1), delta(1), epsilon(1). CF(0) has four main subunits: a(1), b(1), b'(1) and c(10-14). The alpha and beta chains form an alternating ring which encloses part of the gamma chain. F(1) is attached to F(0) by a central stalk formed by the gamma and epsilon chains, while a peripheral stalk is formed by the delta, b and b' chains.

It localises to the cell inner membrane. Its function is as follows. F(1)F(0) ATP synthase produces ATP from ADP in the presence of a proton or sodium gradient. F-type ATPases consist of two structural domains, F(1) containing the extramembraneous catalytic core and F(0) containing the membrane proton channel, linked together by a central stalk and a peripheral stalk. During catalysis, ATP synthesis in the catalytic domain of F(1) is coupled via a rotary mechanism of the central stalk subunits to proton translocation. Functionally, this protein is part of the stalk that links CF(0) to CF(1). It either transmits conformational changes from CF(0) to CF(1) or is implicated in proton conduction. In Bradyrhizobium sp. (strain ORS 278), this protein is ATP synthase subunit delta.